A 418-amino-acid polypeptide reads, in one-letter code: F-box protein At1g10780 (418 aa).

One can recognise an F-box domain in the interval 1 to 47 (MDSLPDAILQYILSYLTSARDVAACNCVSKRWKESTDSVKSVVFHRN).

The protein is F-box protein At1g10780 of Arabidopsis thaliana (Mouse-ear cress).